We begin with the raw amino-acid sequence, 835 residues long: Protein VP3 (835 aa).

The N7-methyltransferase activity stretch occupies residues 171-245 (RKIKERMTTS…KHTIKLKQEK (75 aa)). Positions 246-428 (WLGKRVSQFD…INIKRFIPKG (183 aa)) are 2'-O-methyltransferase activity. Residues 429–555 (VFYAFINNIT…NHLFIINGTD (127 aa)) are N7-methyltransferase activity. The segment at 556–692 (KYYKLDQYAN…EYINKVYSIT (137 aa)) is GTase/RTPase activity. The 2'-5'-phosphodiesterase activity stretch occupies residues 693 to 835 (YADDPNYFIG…KGETVFDMSE (143 aa)). Catalysis depends on for 2'-5'-phosphodiesterase activity residues H718, T720, H797, and T799.

It belongs to the rotavirus VP3 family. Interacts with VP1. Interacts with VP2.

Its subcellular location is the virion. It carries out the reaction a 5'-end diphospho-ribonucleoside in mRNA + GTP + H(+) = a 5'-end (5'-triphosphoguanosine)-ribonucleoside in mRNA + diphosphate. The enzyme catalyses a 5'-end (5'-triphosphoguanosine)-ribonucleoside in mRNA + S-adenosyl-L-methionine = a 5'-end (N(7)-methyl 5'-triphosphoguanosine)-ribonucleoside in mRNA + S-adenosyl-L-homocysteine. It catalyses the reaction 5'-triphosphoadenylyl-(2'-&gt;5')-adenylyl-(2'-&gt;5')-adenosine + 2 H2O = 2 AMP + ATP + 2 H(+). Its function is as follows. Multifunctional enzyme involved in mRNA capping. Catalyzes the formation of the 5' cap structure on the viral plus-strand transcripts. Specifically binds to GTP and displays guanylyltransferase and methyltransferase activities. Has affinity for ssRNA but not for dsRNA. Capping activity is non-specific and caps RNAs that initiate with either a G or an A residue. Together with VP1 polymerase, forms a VP1-VP3 complex positioned near the channels situated at each of the five-fold vertices of the core. Following infection, the outermost layer of the virus is lost, leaving a double-layered particle (DLP) made up of the core and VP6 shell. VP1 then catalyzes the transcription of fully conservative plus-strand genomic RNAs that are capped by VP3 and extruded through the DLP's channels into the cytoplasm where they function as mRNAs for translation of viral proteins. DLPs probably have an RNA triphosphatase activity as well, whereas open cores do not. In terms of biological role, counteracts the host innate immune response thanks to its phosphodiesterase that degrades the 5'-triphosphorylated, 2'-5' linked adenylate oligomers produced by the host cell IFN-inducible 2',5'-oligoadenylate synthetase (OAS). The host RNaseL is therefore not activated. The protein is Protein VP3 of Homo sapiens (Human).